A 315-amino-acid chain; its full sequence is GTP cyclohydrolase MptA (315 aa).

It belongs to the GTP cyclohydrolase IV family. In terms of assembly, homodimer. Requires Fe(2+) as cofactor.

It catalyses the reaction GTP + H2O = 7,8-dihydroneopterin 2',3'-cyclic phosphate + formate + diphosphate + H(+). The protein operates within cofactor biosynthesis; 5,6,7,8-tetrahydromethanopterin biosynthesis. Converts GTP to 7,8-dihydro-D-neopterin 2',3'-cyclic phosphate, the first intermediate in the biosynthesis of coenzyme methanopterin. This is GTP cyclohydrolase MptA from Methanococcus maripaludis (strain DSM 14266 / JCM 13030 / NBRC 101832 / S2 / LL).